The following is a 69-amino-acid chain: DNA-directed RNA polymerase subunit epsilon (69 aa).

Belongs to the RNA polymerase subunit epsilon family. RNAP is composed of a core of 2 alpha, a beta and a beta' subunit. The core is associated with a delta subunit, and at least one of epsilon or omega. When a sigma factor is associated with the core the holoenzyme is formed, which can initiate transcription.

It carries out the reaction RNA(n) + a ribonucleoside 5'-triphosphate = RNA(n+1) + diphosphate. Its function is as follows. A non-essential component of RNA polymerase (RNAP). This is DNA-directed RNA polymerase subunit epsilon from Lysinibacillus sphaericus (strain C3-41).